We begin with the raw amino-acid sequence, 308 residues long: Heme A synthase (308 aa).

Residues 1 to 8 are Cytoplasmic-facing; sequence MFKKRNLK. The chain crosses the membrane as a helical span at residues 9–29; the sequence is WLSILATVIMAWVQLGGALVT. Over 30–67 the chain is Extracellular; that stretch reads KTGSENGCGASWPLCHGALLPQNLPIATIIELSHRATS. Cysteine 37 and cysteine 44 are disulfide-bonded. Glutamate 60 is an active-site residue. Heme o is bound at residue histidine 63. The chain crosses the membrane as a helical span at residues 68-88; the sequence is ALSLIVVLWLVITAWKNIGYI. At 89-93 the chain is on the cytoplasmic side; sequence KEVKP. The chain crosses the membrane as a helical span at residues 94–114; that stretch reads LCIISVAFLLIQALVGAAAVL. Topologically, residues 115–123 are extracellular; sequence WQQNDYVLA. A helical transmembrane segment spans residues 124–144; that stretch reads LHFGISLISFSSVFVLTLIIF. Histidine 125 provides a ligand contact to heme o. Topologically, residues 145–161 are cytoplasmic; sequence DVDQKYEANKVHIDRKL. Residues 162-182 form a helical membrane-spanning segment; the sequence is RIYTWTMAICLYVGIYTGALV. Residues 183–215 lie on the Extracellular side of the membrane; the sequence is RHTKSSLAYGSWPLPFNDLIPHTEQDWVQLAHR. Histidine 214 contacts heme b. Residues 216-236 form a helical membrane-spanning segment; that stretch reads TLALIASISVFLAFNYAIKHY. At 237–244 the chain is on the cytoplasmic side; sequence QNNRTIRY. Residues 245 to 265 traverse the membrane as a helical segment; it reads GYTAALLLIILQIVTGALSIF. At 266–270 the chain is on the extracellular side; the sequence is THVNL. A helical transmembrane segment spans residues 271–291; that stretch reads IIALLHALIITFEFGLIAYLI. Histidine 276 serves as a coordination point for heme b. Topologically, residues 292-308 are cytoplasmic; that stretch reads VLLLRSQRVEKVKQNAY.

It belongs to the COX15/CtaA family. Type 1 subfamily. Interacts with CtaB. Heme b is required as a cofactor.

The protein localises to the cell membrane. The catalysed reaction is Fe(II)-heme o + 2 A + H2O = Fe(II)-heme a + 2 AH2. It functions in the pathway porphyrin-containing compound metabolism; heme A biosynthesis; heme A from heme O: step 1/1. Its function is as follows. Catalyzes the conversion of heme O to heme A by two successive hydroxylations of the methyl group at C8. The first hydroxylation forms heme I, the second hydroxylation results in an unstable dihydroxymethyl group, which spontaneously dehydrates, resulting in the formyl group of heme A. This is Heme A synthase from Staphylococcus carnosus (strain TM300).